The primary structure comprises 481 residues: Putative amino-acid transporter CPE0389 (481 aa).

A run of 13 helical transmembrane segments spans residues 7 to 27, 36 to 56, 87 to 107, 127 to 147, 156 to 176, 208 to 228, 241 to 261, 289 to 309, 338 to 358, 364 to 384, 401 to 421, 422 to 442, and 461 to 481; these read LGVI…GVYN, ASAG…WFIA, FLMA…YAVL, LSIA…LAGV, IGTI…LFSF, STML…VVSG, FLGF…PLGV, VIMN…WTVM, FSLL…HFAG, MLSI…LYLF, RKYA…LIYA, AGIN…PVFI, and YFAI…FKFM.

Belongs to the amino acid-polyamine-organocation (APC) superfamily. Basic amino acid/polyamine antiporter (APA) (TC 2.A.3.2) family.

The protein localises to the cell membrane. Its function is as follows. Could be an amino acid transporter. In Clostridium perfringens (strain 13 / Type A), this protein is Putative amino-acid transporter CPE0389.